The primary structure comprises 247 residues: MADTTPNGPQGAGAVQFMMTNKLDTAMWLSRLFTVYCSALFVLPLLGLHEAASFYQRALLANALTSALRLHQRLPHFQLSRAFLAQALLEDSCHYLLYSLIFVNSYPVTMSIFPVLLFSLLHAATYTKKVLDARGSNSLPLLRSVLDKLSANQQNILKFIACNEIFLMPATVFMLFSGQGSLLQPFIYYRFLTLRYSSRRNPYCRTLFNELRIVVEHIIMKPACPLFVRRLCLQSIAFISRLAPTVP.

An N-acetylalanine modification is found at alanine 2. Topologically, residues 2 to 31 (ADTTPNGPQGAGAVQFMMTNKLDTAMWLSR) are lumenal. The helical transmembrane segment at 32 to 52 (LFTVYCSALFVLPLLGLHEAA) threads the bilayer. Residues 53–100 (SFYQRALLANALTSALRLHQRLPHFQLSRAFLAQALLEDSCHYLLYSL) are Cytoplasmic-facing. The chain crosses the membrane as a helical span at residues 101–121 (IFVNSYPVTMSIFPVLLFSLL). At 122-155 (HAATYTKKVLDARGSNSLPLLRSVLDKLSANQQN) the chain is on the lumenal side. A helical transmembrane segment spans residues 156 to 176 (ILKFIACNEIFLMPATVFMLF). Residues 177 to 247 (SGQGSLLQPF…FISRLAPTVP (71 aa)) are Cytoplasmic-facing.

This sequence belongs to the PER33/POM33 family. In terms of assembly, interacts with EIF2AK3. Interacts with ARL6IP1, isoform RTN1-A of RTN1, isoform RTN2-B of RTN2, isoform 3 of RTN3 and isoform 3 of RTN4. Interacts with RNF5. Interacts with RNF26. Interacts with PKD2. As to expression, prostate cancer and several cancer cell lines (at protein level). Widely expressed. Expressed at higher levels in endocrine-resistant breast cancer cells as compared to endocrine-sensitive breast cancer cells. Expressed at higher levels in early recurrence breast cancer tissues as compared to non-recurrent breast tumors.

The protein localises to the endoplasmic reticulum membrane. Its subcellular location is the melanosome. It localises to the nucleus envelope. Its function is as follows. Acts as a regulator of the tubular endoplasmic reticulum (ER) network by modulating intracellular calcium homeostasis. Mechanistically, stimulates PKD2 calcium-dependent activity. Suppresses the RTN3/4-induced formation of the ER tubules. Positively regulates PERK-mediated and IRE1-mediated unfolded protein response signaling. Plays an essential role in VEGF-mediated release of Ca(2+) from ER stores during angiogenesis. Also plays a role in the modulation of innate immune signaling through the cGAS-STING pathway by interacting with RNF26. Participates in lipid metabolism by acting as a downstream effector of the pyruvate kinase/PKM. Forms a complex with RNF5 to facilitate polyubiquitination and subsequent degradation of SCAP on the ER membrane. This chain is Transmembrane protein 33 (TMEM33), found in Homo sapiens (Human).